Consider the following 401-residue polypeptide: S-adenosylmethionine synthase (401 aa).

An ATP-binding site is contributed by 135 to 140; the sequence is GHGSGD.

This sequence belongs to the AdoMet synthase 2 family. Requires Mg(2+) as cofactor.

It carries out the reaction L-methionine + ATP + H2O = S-adenosyl-L-methionine + phosphate + diphosphate. Its pathway is amino-acid biosynthesis; S-adenosyl-L-methionine biosynthesis; S-adenosyl-L-methionine from L-methionine: step 1/1. Functionally, catalyzes the formation of S-adenosylmethionine from methionine and ATP. The protein is S-adenosylmethionine synthase (mat) of Methanothermobacter marburgensis (strain ATCC BAA-927 / DSM 2133 / JCM 14651 / NBRC 100331 / OCM 82 / Marburg) (Methanobacterium thermoautotrophicum).